The chain runs to 237 residues: Uridylate kinase (237 aa).

11 to 14 (KLSG) serves as a coordination point for ATP. The involved in allosteric activation by GTP stretch occupies residues 18–23 (GGGGIG). Gly-52 contributes to the UMP binding site. ATP-binding residues include Gly-53 and Arg-57. UMP contacts are provided by residues Asp-72 and 133–140 (SGMPYFST). Gln-161, Tyr-167, and Asp-170 together coordinate ATP.

This sequence belongs to the UMP kinase family. As to quaternary structure, homohexamer.

The protein resides in the cytoplasm. It carries out the reaction UMP + ATP = UDP + ADP. The protein operates within pyrimidine metabolism; CTP biosynthesis via de novo pathway; UDP from UMP (UMPK route): step 1/1. With respect to regulation, allosterically activated by GTP. Inhibited by UTP. Functionally, catalyzes the reversible phosphorylation of UMP to UDP. This is Uridylate kinase from Cutibacterium acnes (strain DSM 16379 / KPA171202) (Propionibacterium acnes).